Here is a 68-residue protein sequence, read N- to C-terminus: Copper transport protein ATOX1 (68 aa).

Residues 1 to 63 (MPKHEFSVDM…TLGKTGKAVS (63 aa)) form the HMA domain. Cu cation is bound by residues Cys-12 and Cys-15. Ser-47 bears the Phosphoserine mark. At Lys-60 the chain carries N6-acetyllysine.

The protein belongs to the ATX1 family. As to quaternary structure, homodimer. Interacts with ATP7B. Interacts with ATP7A. Interacts (via dimer form) with SLC31A1 (via C-terminal domain); this interaction improves ATOX1 stability and controls intracellular Cu(I) levels.

Functionally, binds and deliver cytosolic copper to the copper ATPase proteins. May be important in cellular antioxidant defense. This Bos taurus (Bovine) protein is Copper transport protein ATOX1.